Reading from the N-terminus, the 632-residue chain is Nucleoside triphosphatase I (632 aa).

In terms of domain architecture, Helicase ATP-binding spans 42 to 204; sequence FLGLDKMHSL…VMLVNLLRPK (163 aa). 55-62 contributes to the ATP binding site; the sequence is HETGVGKT. Residues 141–144 carry the DEXH box motif; that stretch reads DECH. The Helicase C-terminal domain maps to 367–532; it reads KFTDVCLRIL…EFTQLFKVFK (166 aa). The interval 457-524 is binding to the cap-specific mRNA (nucleoside-2'-O-)-methyltransferase; that stretch reads DIFILDMTWN…DIIRTKSKEF (68 aa).

It belongs to the helicase family. NPH I subfamily. As to quaternary structure, monomer. Interacts (via C-terminus) with RAP94 (via N-terminus). Interacts with the cap-specific mRNA (nucleoside-2'-O-)-methyltransferase.

It localises to the virion. The catalysed reaction is a ribonucleoside 5'-triphosphate + H2O = a ribonucleoside 5'-diphosphate + phosphate + H(+). In terms of biological role, DNA-dependent ATPase required for providing the needed energy to achieve the termination of early transcripts. Acts in concert with the RAP94 subunit of the virion RNA polymerase and the capping enzyme/VTF to catalyze release of UUUUUNU-containing nascent RNA from the elongation complex. NPH-I must bind ssDNA in order to exhibit ATPase activity. In Myxoma virus (strain Lausanne) (MYXV), this protein is Nucleoside triphosphatase I (NPH1).